The primary structure comprises 690 residues: Protease 2 (690 aa).

Residues Ser-534, Asp-619, and His-654 each act as charge relay system in the active site.

This sequence belongs to the peptidase S9A family.

The catalysed reaction is Hydrolysis of -Arg-|-Xaa- and -Lys-|-Xaa- bonds in oligopeptides, even when P1' residue is proline.. Functionally, cleaves peptide bonds on the C-terminal side of lysyl and argininyl residues. In Moraxella lacunata, this protein is Protease 2 (ptrB).